Here is a 393-residue protein sequence, read N- to C-terminus: S-adenosylmethionine decarboxylase proenzyme (393 aa).

Catalysis depends on residues Glu11 and Glu14. Ser71 serves as the catalytic Schiff-base intermediate with substrate; via pyruvic acid. A Pyruvic acid (Ser); by autocatalysis modification is found at Ser71. Residue Cys85 is the Proton donor; for catalytic activity of the active site. Residues Ser236 and His249 each act as proton acceptor; for processing activity in the active site.

The protein belongs to the eukaryotic AdoMetDC family. Requires pyruvate as cofactor. Post-translationally, is synthesized initially as an inactive proenzyme. Formation of the active enzyme involves a self-maturation process in which the active site pyruvoyl group is generated from an internal serine residue via an autocatalytic post-translational modification. Two non-identical subunits are generated from the proenzyme in this reaction, and the pyruvate is formed at the N-terminus of the alpha chain, which is derived from the carboxyl end of the proenzyme. The post-translation cleavage follows an unusual pathway, termed non-hydrolytic serinolysis, in which the side chain hydroxyl group of the serine supplies its oxygen atom to form the C-terminus of the beta chain, while the remainder of the serine residue undergoes an oxidative deamination to produce ammonia and the pyruvoyl group blocking the N-terminus of the alpha chain.

The enzyme catalyses S-adenosyl-L-methionine + H(+) = S-adenosyl 3-(methylsulfanyl)propylamine + CO2. The protein operates within amine and polyamine biosynthesis; S-adenosylmethioninamine biosynthesis; S-adenosylmethioninamine from S-adenosyl-L-methionine: step 1/1. The sequence is that of S-adenosylmethionine decarboxylase proenzyme (SAMDC) from Hordeum chilense (Barley).